Reading from the N-terminus, the 407-residue chain is Rubber oxygenase (407 aa).

Residues methionine 1–alanine 30 constitute a signal peptide (tat-type signal). Heme is bound at residue histidine 198.

It belongs to the rubber oxygenase Lcp family. It depends on heme b as a cofactor. Exported by the Tat system. The position of the signal peptide cleavage has not been experimentally proven.

It localises to the secreted. The protein operates within biopolymer metabolism. Functionally, involved in the initial step of rubber degradation. Catalyzes the oxidative C-C cleavage of poly(cis-1,4-isoprene) in synthetic as well as in natural rubber by the addition of oxygen (O2) to the double bonds, leading to a mixture of oligonucleotide-isoprenoids with terminal keto and aldehyde groups (endo-type cleavage). The cleavage products are of different lengths, ranging from C20 (four isoprene units) to higher oligo-isoprenoids. Is not able to cleave low-molecular-weight substrate analogs with isoprenoid structure such as squalene (1,4-trans-isoprenoid), carotenoids, or alpha-tocopherol. This Streptomyces sp. (strain K30) protein is Rubber oxygenase.